The primary structure comprises 417 residues: Gamma-glutamyl phosphate reductase (417 aa).

This sequence belongs to the gamma-glutamyl phosphate reductase family.

The protein resides in the cytoplasm. The catalysed reaction is L-glutamate 5-semialdehyde + phosphate + NADP(+) = L-glutamyl 5-phosphate + NADPH + H(+). It participates in amino-acid biosynthesis; L-proline biosynthesis; L-glutamate 5-semialdehyde from L-glutamate: step 2/2. Its function is as follows. Catalyzes the NADPH-dependent reduction of L-glutamate 5-phosphate into L-glutamate 5-semialdehyde and phosphate. The product spontaneously undergoes cyclization to form 1-pyrroline-5-carboxylate. The sequence is that of Gamma-glutamyl phosphate reductase from Haemophilus influenzae (strain PittGG).